The chain runs to 354 residues: Replication factor C subunit 5 (354 aa).

ATP-binding positions include Val-5, Ser-17, 43-51 (GPNGTGKKT), and Arg-231.

Belongs to the activator 1 small subunits family. In terms of assembly, replication factor C (RFC) is a heteropentamer of subunits RFC1, RFC2, RFC3, RFC4 and RFC5 and forms a complex with POL30/PCNA in the presence of ATP. Component of the RAD24-RFC complex which consists of RAD24, RFC2, RFC3, RFC4 and RFC5 and associates with the checkpoint clamp DDC1:MEC3:RAD17 complex. Component of the ELG1-RFC complex which consists of ELG1, RFC2, RFC3, RFC4 and RFC5. Component of the CTF18-RFC complex, which consists of CTF18, CTF8, DCC1, RFC2, RFC3, RFC4 and RFC5. RFC5 interacts with ECO1.

The protein resides in the nucleus. In terms of biological role, component of ATP-dependent clamp loader (RFC and RFC-like) complexes for DNA clamps, such as the POL30/PCNA homotrimer and the checkpoint clamp DDC1:MEC3:RAD17 complex. During a clamp loading circle, the RFC:clamp complex binds to DNA and the recognition of the double-stranded/single-stranded junction stimulates ATP hydrolysis by RFC. The complex presumably provides bipartite ATP sites in which one subunit supplies a catalytic site for hydrolysis of ATP bound to the neighboring subunit. Dissociation of RFC from the clamp leaves the clamp encircling DNA. Component of the replication factor C (RFC or activator 1) complex which loads POL30/PCNA and acts during elongation of primed DNA templates by DNA polymerase delta and epsilon. RFC has an essential but redundant activity in sister chromatid cohesion establishment. Component of the RFC-like complex CTF18-RFC which is required for efficient establishment of chromosome cohesion during S-phase and may load or unload POL30/PCNA. Component of the RFC-like RAD24-RFC complex which loads the checkpoint clamp DDC1:MEC3:RAD17 complex and is involved in DNA repair pathways. Component of the RFC-like ELG1-RFC complex which appears to have a role in DNA replication, replication fork re-start, recombination and repair. This is Replication factor C subunit 5 (RFC5) from Saccharomyces cerevisiae (strain ATCC 204508 / S288c) (Baker's yeast).